Here is a 136-residue protein sequence, read N- to C-terminus: Large ribosomal subunit protein eL27 (136 aa).

Residues 5–40 (MKPGKVVMVLAGRYAGRKAVIVKNIDDGTADRPYSH) enclose the KOW domain.

The protein belongs to the eukaryotic ribosomal protein eL27 family. In terms of assembly, component of the large ribosomal subunit.

Its subcellular location is the cytoplasm. It localises to the cytosol. The protein localises to the rough endoplasmic reticulum. Component of the large ribosomal subunit. The protein is Large ribosomal subunit protein eL27 (rpl27) of Ictalurus punctatus (Channel catfish).